The chain runs to 63 residues: Large ribosomal subunit protein eL29 (63 aa).

The span at 1 to 26 (MAKSKNHTAHNQTRKAHRNGIKKPKT) shows a compositional bias: basic residues. Positions 1–35 (MAKSKNHTAHNQTRKAHRNGIKKPKTYKYPSLKGV) are disordered.

Belongs to the eukaryotic ribosomal protein eL29 family. Component of the large ribosomal subunit. Mature ribosomes consist of a small (40S) and a large (60S) subunit. The 40S subunit contains about 32 different proteins and 1 molecule of RNA (18S). The 60S subunit contains 45 different proteins and 3 molecules of RNA (25S, 5.8S and 5S).

The protein resides in the cytoplasm. Its function is as follows. Component of the ribosome, a large ribonucleoprotein complex responsible for the synthesis of proteins in the cell. The small ribosomal subunit (SSU) binds messenger RNAs (mRNAs) and translates the encoded message by selecting cognate aminoacyl-transfer RNA (tRNA) molecules. The large subunit (LSU) contains the ribosomal catalytic site termed the peptidyl transferase center (PTC), which catalyzes the formation of peptide bonds, thereby polymerizing the amino acids delivered by tRNAs into a polypeptide chain. The nascent polypeptides leave the ribosome through a tunnel in the LSU and interact with protein factors that function in enzymatic processing, targeting, and the membrane insertion of nascent chains at the exit of the ribosomal tunnel. The polypeptide is Large ribosomal subunit protein eL29 (Candida albicans (strain SC5314 / ATCC MYA-2876) (Yeast)).